Consider the following 347-residue polypeptide: Ribosomal RNA large subunit methyltransferase M (347 aa).

S-adenosyl-L-methionine is bound by residues Ser184, 217-220 (APGG), Asp236, Asp256, and Asp272. The Proton acceptor role is filled by Lys301.

Belongs to the class I-like SAM-binding methyltransferase superfamily. RNA methyltransferase RlmE family. RlmM subfamily. Monomer.

It localises to the cytoplasm. The enzyme catalyses cytidine(2498) in 23S rRNA + S-adenosyl-L-methionine = 2'-O-methylcytidine(2498) in 23S rRNA + S-adenosyl-L-homocysteine + H(+). Catalyzes the 2'-O-methylation at nucleotide C2498 in 23S rRNA. In Xanthomonas campestris pv. campestris (strain 8004), this protein is Ribosomal RNA large subunit methyltransferase M.